The primary structure comprises 548 residues: Protein GPR108 (548 aa).

The first 32 residues, 1–32 (MAVSERRGLGRGSPAEWGPWLLLLLLLGGSSG), serve as a signal peptide directing secretion. Residues Asn57, Asn63, and Asn109 are each glycosylated (N-linked (GlcNAc...) asparagine). Residues 165–190 (DHAGTTAAPDKAKSKPTGLQGDRQGV) are disordered. N-linked (GlcNAc...) asparagine glycans are attached at residues Asn205 and Asn209. Helical transmembrane passes span 268–288 (LYMV…SILC), 297–317 (IHWL…FHSI), 341–361 (LLKG…WAFV), 372–392 (IFGI…VMES), 406–426 (ILFL…VWSI), 454–474 (VMVI…RAVV), and 478–498 (WQWL…VLTG). Asn539 is a glycosylation site (N-linked (GlcNAc...) asparagine).

Belongs to the LU7TM family.

The protein localises to the golgi apparatus. It is found in the cis-Golgi network membrane. The protein resides in the trans-Golgi network membrane. Its subcellular location is the golgi apparatus membrane. Its function is as follows. May play a role in intracellular immune modulation by activating NF-kappaB response and attenuating Toll-like-receptor response. This Bos taurus (Bovine) protein is Protein GPR108 (GPR108).